A 172-amino-acid chain; its full sequence is Dehydratase cfoI (172 aa).

Active-site residues include His86 and His111.

It belongs to the scytalone dehydratase family. As to quaternary structure, homotrimer. Each subunit contains an active site, located in the central part of the hydrophobic core of the monomer, which functions independently.

Its pathway is secondary metabolite biosynthesis; flavonoid biosynthesis. Its function is as follows. Cytochrome P450 monooxygenase; part of the gene cluster that mediates the biosynthesis of chlorflavonin, a fungal flavonoid with acetolactate synthase inhibitory activity. Within the pathway, cfoI is responsible for the hydroxylation of the flavonoid skeleton at position C3 with cfoF. The pathway begins with the PKS-NRPS hybrid synthetase cfoA that uses benzoic acid or p-hydroxybenzoic acid as a starter unit with four rounds of chain elongation using malonyl-CoA to form the chalcone skeleton. Then, a new type of chalcone isomerase, cfoK, catalyzes the conversion of the chalcone into a flavanone by a histidine-mediated oxa-Michael addition mechanism. The desaturation of flavanone to flavone is catalyzed by a new type of flavone synthase, the flavin mononucleotide (FMN)-dependent oxidoreductase cfoJ. Monooxygenases cfoF, cfoG, and P450 cfoH are responsible for the hydroxylation of the flavonoid skeleton at sites C3, C8, and C2', respectively. Like cfoF, the dehydratase cfoI plays also a role in the hydroxylation of position C3. Methyltransferases cfoB, cfoC, and cfoD then catalyze the methylation of C7-OH, C8-OH, and C3-OH, respectively. Finally, the monooxygenase cfoE is responsible for the chlorination of flavonoid at position C3'. The chain is Dehydratase cfoI from Aspergillus candidus.